Consider the following 318-residue polypeptide: Probable dual-specificity RNA methyltransferase RlmN (318 aa).

E63 acts as the Proton acceptor in catalysis. Positions 69 to 299 (HDYGRTVCVS…VSLRRELGAD (231 aa)) constitute a Radical SAM core domain. C76 and C304 are joined by a disulfide. [4Fe-4S] cluster-binding residues include C83, C87, and C90. Residues 130 to 131 (GE), S162, 185 to 187 (SLH), and N261 contribute to the S-adenosyl-L-methionine site. The S-methylcysteine intermediate role is filled by C304.

Belongs to the radical SAM superfamily. RlmN family. Requires [4Fe-4S] cluster as cofactor.

It localises to the cytoplasm. The catalysed reaction is adenosine(2503) in 23S rRNA + 2 reduced [2Fe-2S]-[ferredoxin] + 2 S-adenosyl-L-methionine = 2-methyladenosine(2503) in 23S rRNA + 5'-deoxyadenosine + L-methionine + 2 oxidized [2Fe-2S]-[ferredoxin] + S-adenosyl-L-homocysteine. The enzyme catalyses adenosine(37) in tRNA + 2 reduced [2Fe-2S]-[ferredoxin] + 2 S-adenosyl-L-methionine = 2-methyladenosine(37) in tRNA + 5'-deoxyadenosine + L-methionine + 2 oxidized [2Fe-2S]-[ferredoxin] + S-adenosyl-L-homocysteine. In terms of biological role, specifically methylates position 2 of adenine 2503 in 23S rRNA and position 2 of adenine 37 in tRNAs. The polypeptide is Probable dual-specificity RNA methyltransferase RlmN (Desulforudis audaxviator (strain MP104C)).